We begin with the raw amino-acid sequence, 156 residues long: Small ribosomal subunit protein uS7 (156 aa).

It belongs to the universal ribosomal protein uS7 family. As to quaternary structure, part of the 30S ribosomal subunit. Contacts proteins S9 and S11.

One of the primary rRNA binding proteins, it binds directly to 16S rRNA where it nucleates assembly of the head domain of the 30S subunit. Is located at the subunit interface close to the decoding center, probably blocks exit of the E-site tRNA. The polypeptide is Small ribosomal subunit protein uS7 (Microcystis aeruginosa (strain NIES-843 / IAM M-2473)).